We begin with the raw amino-acid sequence, 286 residues long: 4-diphosphocytidyl-2-C-methyl-D-erythritol kinase (286 aa).

Lys-12 is a catalytic residue. Residue 96–106 (PHGAGLGGGSA) coordinates ATP. Asp-138 is an active-site residue.

It belongs to the GHMP kinase family. IspE subfamily.

It catalyses the reaction 4-CDP-2-C-methyl-D-erythritol + ATP = 4-CDP-2-C-methyl-D-erythritol 2-phosphate + ADP + H(+). It functions in the pathway isoprenoid biosynthesis; isopentenyl diphosphate biosynthesis via DXP pathway; isopentenyl diphosphate from 1-deoxy-D-xylulose 5-phosphate: step 3/6. Catalyzes the phosphorylation of the position 2 hydroxy group of 4-diphosphocytidyl-2C-methyl-D-erythritol. This is 4-diphosphocytidyl-2-C-methyl-D-erythritol kinase from Nitratidesulfovibrio vulgaris (strain DP4) (Desulfovibrio vulgaris).